The sequence spans 359 residues: Chorismate synthase (359 aa).

Arg47 provides a ligand contact to NADP(+). FMN is bound by residues 123–125, Gly283, 298–302, and Arg326; these read RSS and KPTSS.

It belongs to the chorismate synthase family. In terms of assembly, homotetramer. Requires FMNH2 as cofactor.

The enzyme catalyses 5-O-(1-carboxyvinyl)-3-phosphoshikimate = chorismate + phosphate. The protein operates within metabolic intermediate biosynthesis; chorismate biosynthesis; chorismate from D-erythrose 4-phosphate and phosphoenolpyruvate: step 7/7. Catalyzes the anti-1,4-elimination of the C-3 phosphate and the C-6 proR hydrogen from 5-enolpyruvylshikimate-3-phosphate (EPSP) to yield chorismate, which is the branch point compound that serves as the starting substrate for the three terminal pathways of aromatic amino acid biosynthesis. This reaction introduces a second double bond into the aromatic ring system. This chain is Chorismate synthase, found in Chlamydia pneumoniae (Chlamydophila pneumoniae).